The chain runs to 47 residues: Large ribosomal subunit protein bL34 (47 aa).

It belongs to the bacterial ribosomal protein bL34 family.

The chain is Large ribosomal subunit protein bL34 from Rhodococcus opacus (strain B4).